A 318-amino-acid chain; its full sequence is ADP-L-glycero-D-manno-heptose-6-epimerase (318 aa).

NADP(+)-binding positions include phenylalanine 10 to isoleucine 11, aspartate 31 to aspartate 32, lysine 38, lysine 53, glutamate 80 to serine 84, and asparagine 97. Catalysis depends on tyrosine 144, which acts as the Proton acceptor. Lysine 148 provides a ligand contact to NADP(+). Asparagine 173 provides a ligand contact to substrate. NADP(+) is bound by residues valine 174 and lysine 182. Catalysis depends on lysine 182, which acts as the Proton acceptor. Residues lysine 184, histidine 191, phenylalanine 205–tryptophan 208, arginine 218, and tyrosine 282 each bind substrate.

Belongs to the NAD(P)-dependent epimerase/dehydratase family. HldD subfamily. As to quaternary structure, homopentamer. NADP(+) serves as cofactor.

It carries out the reaction ADP-D-glycero-beta-D-manno-heptose = ADP-L-glycero-beta-D-manno-heptose. Its pathway is nucleotide-sugar biosynthesis; ADP-L-glycero-beta-D-manno-heptose biosynthesis; ADP-L-glycero-beta-D-manno-heptose from D-glycero-beta-D-manno-heptose 7-phosphate: step 4/4. Functionally, catalyzes the interconversion between ADP-D-glycero-beta-D-manno-heptose and ADP-L-glycero-beta-D-manno-heptose via an epimerization at carbon 6 of the heptose. This is ADP-L-glycero-D-manno-heptose-6-epimerase from Chromohalobacter salexigens (strain ATCC BAA-138 / DSM 3043 / CIP 106854 / NCIMB 13768 / 1H11).